Consider the following 397-residue polypeptide: Putative odorant receptor 83c (397 aa).

Residues 1–39 (MSTSESPSSRFRELSKYINSLTNLLGVDFLSPKLKFNYR) are Cytoplasmic-facing. Residues 40–60 (TWTTIFAIANYTGFTVFTILN) form a helical membrane-spanning segment. The Extracellular portion of the chain corresponds to 61 to 70 (NGGDWRVGLK). A helical transmembrane segment spans residues 71–90 (ASLMTGGLFHGLGKFLTCLL). Topologically, residues 91–136 (KHQDMRRLVLYSQSIYDEYETRGDSYHRTLNSNIDRLLGIMKIIRN) are cytoplasmic. The helical transmembrane segment at 137–157 (GYVFAFCLMELLPLAMLMYDG) threads the bilayer. The Extracellular portion of the chain corresponds to 158–186 (TRVTAMQYLIPGLPLENNYCYVVTYMIQT). Residues 187 to 207 (VTMLVQGVGFYSGDLFVFLGL) traverse the membrane as a helical segment. Residues 208-282 (TQILTFADML…ALYYELIATQ (75 aa)) lie on the Cytoplasmic side of the membrane. A helical transmembrane segment spans residues 283-299 (VLSMALAMMLSFCINLS). Residues 300–305 (SFHMPS) are Extracellular-facing. Residues 306-326 (AIFFVVSAYSMSIYCILGTIL) traverse the membrane as a helical segment. At 327-365 (EFAYDQVYESICNVTWYELSGEQRKLFGFLLRESQYPHN) the chain is on the cytoplasmic side. The chain crosses the membrane as a helical span at residues 366 to 386 (IQILGVMSLSVRTALQIVKLI). Over 387 to 397 (YSVSMMMMNRA) the chain is Extracellular.

The protein belongs to the insect chemoreceptor superfamily. Heteromeric odorant receptor channel (TC 1.A.69) family. Or67d subfamily. In terms of assembly, interacts with Orco. Complexes exist early in the endomembrane system in olfactory sensory neurons (OSNs), coupling these complexes to the conserved ciliary trafficking pathway. As to expression, expressed in olfactory sensory neurons in the antenna.

Its subcellular location is the cell membrane. In terms of biological role, odorant receptor which mediates acceptance or avoidance behavior, depending on its substrates. The odorant receptor repertoire encodes a large collection of odor stimuli that vary widely in identity, intensity, and duration. May form a complex with Orco to form odorant-sensing units, providing sensitive and prolonged odorant signaling and calcium permeability. The chain is Putative odorant receptor 83c (Or83c) from Drosophila melanogaster (Fruit fly).